The following is a 407-amino-acid chain: Argininosuccinate synthase (407 aa).

Residues 16-24 (AYSGGLDTS) and A44 contribute to the ATP site. The L-citrulline site is built by Y96 and S101. G126 lines the ATP pocket. The L-aspartate site is built by T128, N132, and D133. N132 contacts L-citrulline. Residues R136, S185, S194, E270, and Y282 each coordinate L-citrulline.

It belongs to the argininosuccinate synthase family. Type 1 subfamily. Homotetramer.

It is found in the cytoplasm. The catalysed reaction is L-citrulline + L-aspartate + ATP = 2-(N(omega)-L-arginino)succinate + AMP + diphosphate + H(+). The protein operates within amino-acid biosynthesis; L-arginine biosynthesis; L-arginine from L-ornithine and carbamoyl phosphate: step 2/3. This chain is Argininosuccinate synthase, found in Shewanella putrefaciens (strain CN-32 / ATCC BAA-453).